We begin with the raw amino-acid sequence, 309 residues long: Dicarboxylate carrier UCP2 (309 aa).

Topologically, residues M1–K16 are mitochondrial intermembrane. Solcar repeat units follow at residues P11 to F106, A114 to A203, and D212 to A297. The tract at residues K16 to L63 is important for interaction with long-chain fatty acids. Residues F17–R40 traverse the membrane as a helical segment. Topologically, residues L41–S77 are mitochondrial matrix. Residues L78–V103 traverse the membrane as a helical segment. Topologically, residues K104–R119 are mitochondrial intermembrane. Residues L120 to Q145 form a helical membrane-spanning segment. Residues A146–R173 are Mitochondrial matrix-facing. Residues G174–L199 form a helical membrane-spanning segment. Over I200–H217 the chain is Mitochondrial intermembrane. A helical transmembrane segment spans residues F218–Y242. Over M243–A268 the chain is Mitochondrial matrix. Residues F269–L294 traverse the membrane as a helical segment. The tract at residues L278–V285 is important for interaction with long-chain fatty acids. Residues K295 to F309 are Mitochondrial intermembrane-facing.

The protein belongs to the mitochondrial carrier (TC 2.A.29) family. As to quaternary structure, homotetramer. Adopts an asymmetrical dimer of dimers functional form. Interacts with MICU1 (when methylated); leading to decrease the calcium sensitivity of MICU1.

The protein resides in the mitochondrion inner membrane. It catalyses the reaction L-aspartate(out) + phosphate(in) + H(+)(in) = L-aspartate(in) + phosphate(out) + H(+)(out). It carries out the reaction oxaloacetate(out) + phosphate(in) + H(+)(in) = oxaloacetate(in) + phosphate(out) + H(+)(out). The catalysed reaction is (S)-malate(out) + phosphate(in) + H(+)(in) = (S)-malate(in) + phosphate(out) + H(+)(out). The enzyme catalyses malonate(out) + phosphate(in) + H(+)(in) = malonate(in) + phosphate(out) + H(+)(out). It catalyses the reaction sulfate(out) + phosphate(in) + H(+)(in) = sulfate(in) + phosphate(out) + H(+)(out). It carries out the reaction (S)-malate(out) = (S)-malate(in). The catalysed reaction is L-aspartate(out) = L-aspartate(in). The enzyme catalyses phosphate(in) = phosphate(out). It catalyses the reaction chloride(in) = chloride(out). It carries out the reaction H(+)(in) = H(+)(out). The catalysed reaction is a long-chain fatty acid(out) = a long-chain fatty acid(in). In terms of biological role, antiporter that exports dicarboxylate intermediates of the Krebs cycle in exchange for phosphate plus a proton across the inner membrane of mitochondria, a process driven by mitochondrial motive force with an overall impact on glycolysis, glutaminolysis and glutathione-dependent redox balance. Continuous export of oxaloacetate and related four-carbon dicarboxylates from mitochondrial matrix into the cytosol negatively regulates the oxidation of acetyl-CoA substrates via the Krebs cycle lowering the ATP/ADP ratio and reactive oxygen species (ROS) production. May mediate inducible proton entry into the mitochondrial matrix affecting ATP turnover as a protection mechanism against oxidative stress. The proton currents are most likely associated with fatty acid flipping across the inner membrane of mitochondria in a metabolic process regulated by free fatty acids and purine nucleotides. Regulates the use of glucose as a source of energy. Required for glucose-induced DRP1-dependent mitochondrial fission and neuron activation in the ventromedial nucleus of the hypothalamus (VMH). This mitochondrial adaptation mechanism modulates the VMH pool of glucose-excited neurons with an impact on systemic glucose homeostasis. Regulates ROS levels and metabolic reprogramming of macrophages during the resolution phase of inflammation. Attenuates ROS production in response to IL33 to preserve the integrity of the Krebs cycle required for persistent production of itaconate and subsequent GATA3-dependent differentiation of inflammation-resolving alternatively activated macrophages. Can unidirectionally transport anions including L-malate, L-aspartate, phosphate and chloride ions. Does not mediate adaptive thermogenesis. This chain is Dicarboxylate carrier UCP2 (UCP2), found in Canis lupus familiaris (Dog).